Consider the following 230-residue polypeptide: Demethylmenaquinone methyltransferase (230 aa).

Residues threonine 62, aspartate 80, aspartate 100–alanine 101, and serine 117 contribute to the S-adenosyl-L-methionine site.

This sequence belongs to the class I-like SAM-binding methyltransferase superfamily. MenG/UbiE family.

It carries out the reaction a 2-demethylmenaquinol + S-adenosyl-L-methionine = a menaquinol + S-adenosyl-L-homocysteine + H(+). Its pathway is quinol/quinone metabolism; menaquinone biosynthesis; menaquinol from 1,4-dihydroxy-2-naphthoate: step 2/2. Its function is as follows. Methyltransferase required for the conversion of demethylmenaquinol (DMKH2) to menaquinol (MKH2). This chain is Demethylmenaquinone methyltransferase, found in Mycobacterium sp. (strain KMS).